A 20-amino-acid chain; its full sequence is Punein (20 aa).

The Barwin domain maps to 1–20; the sequence is YHYYNPEENHFCATWDASKP.

Post-translationally, the N-terminus is blocked.

The polypeptide is Punein (Punica granatum (Pomegranate)).